The primary structure comprises 260 residues: Thiazole synthase (260 aa).

The active-site Schiff-base intermediate with DXP is Lys102. Residues Gly163, Ala189 to Gly190, and Asn211 to Thr212 each bind 1-deoxy-D-xylulose 5-phosphate.

This sequence belongs to the ThiG family. In terms of assembly, homotetramer. Forms heterodimers with either ThiH or ThiS.

It is found in the cytoplasm. It carries out the reaction [ThiS sulfur-carrier protein]-C-terminal-Gly-aminoethanethioate + 2-iminoacetate + 1-deoxy-D-xylulose 5-phosphate = [ThiS sulfur-carrier protein]-C-terminal Gly-Gly + 2-[(2R,5Z)-2-carboxy-4-methylthiazol-5(2H)-ylidene]ethyl phosphate + 2 H2O + H(+). Its pathway is cofactor biosynthesis; thiamine diphosphate biosynthesis. Functionally, catalyzes the rearrangement of 1-deoxy-D-xylulose 5-phosphate (DXP) to produce the thiazole phosphate moiety of thiamine. Sulfur is provided by the thiocarboxylate moiety of the carrier protein ThiS. In vitro, sulfur can be provided by H(2)S. This chain is Thiazole synthase, found in Geobacter sp. (strain M21).